Reading from the N-terminus, the 224-residue chain is Response regulator protein GraR (224 aa).

The region spanning 2 to 115 (QILLVEDDNT…VLIAKLQAIY (114 aa)) is the Response regulatory domain. D51 bears the 4-aspartylphosphate mark. The ompR/PhoB-type DNA-binding region spans 126–224 (KRTLTWQDAV…KVGKGYMAHE (99 aa)). Residues T128, T130, and T149 each carry the phosphothreonine modification.

Interacts with GraX. Post-translationally, phosphorylated by GraS. Phosphorylated by Stk1; phosphorylation increases the DNA-binding activity of GraR.

The protein localises to the cytoplasm. Its function is as follows. Member of the two-component regulatory system GraR/GraS involved in resistance against cationic antimicrobial peptides (CAMPs). Upon phosphorylation by GraS, functions as a transcription regulator by direct binding to promoter regions of target genes such as adhesins, exoproteins, transporters, toxins, and proteins involved in cell wall synthesis. Down-regulates the expression of many genes involved in RNA and amino acid synthesis or glycolysis. The protein is Response regulator protein GraR (graR) of Staphylococcus aureus (strain USA300).